We begin with the raw amino-acid sequence, 380 residues long: Protein RecA (380 aa).

An ATP-binding site is contributed by 65–72 (GPESSGKT). The tract at residues 329–380 (DATGEETSETDDQAKEAKDKGTAKNGSKGQSKSTKATPAETALDLGDQPTEK) is disordered. Over residues 340-350 (DQAKEAKDKGT) the composition is skewed to basic and acidic residues. Residues 352–364 (KNGSKGQSKSTKA) are compositionally biased toward polar residues.

It belongs to the RecA family.

The protein localises to the cytoplasm. Can catalyze the hydrolysis of ATP in the presence of single-stranded DNA, the ATP-dependent uptake of single-stranded DNA by duplex DNA, and the ATP-dependent hybridization of homologous single-stranded DNAs. It interacts with LexA causing its activation and leading to its autocatalytic cleavage. The protein is Protein RecA of Lactiplantibacillus plantarum (strain ATCC BAA-793 / NCIMB 8826 / WCFS1) (Lactobacillus plantarum).